The sequence spans 162 residues: Catabolic 3-dehydroquinase (162 aa).

Tyr24 (proton acceptor) is an active-site residue. Residues Asn88, His94, and Asp101 each coordinate substrate. The active-site Proton donor is the His114. Substrate-binding positions include 115–116 and Arg125; that span reads VS.

This sequence belongs to the type-II 3-dehydroquinase family. As to quaternary structure, homododecamer. Adopts a ring-like structure, composed of an arrangement of two hexameric rings stacked on top of one another.

The enzyme catalyses 3-dehydroquinate = 3-dehydroshikimate + H2O. Its pathway is aromatic compound metabolism; 3,4-dihydroxybenzoate biosynthesis; 3,4-dihydroxybenzoate from 3-dehydroquinate: step 1/2. Is involved in the catabolism of quinate. Allows the utilization of quinate as carbon source via the beta-ketoadipate pathway. The polypeptide is Catabolic 3-dehydroquinase (Podospora anserina (strain S / ATCC MYA-4624 / DSM 980 / FGSC 10383) (Pleurage anserina)).